Reading from the N-terminus, the 612-residue chain is FAD-linked oxidoreductase easE (612 aa).

The FAD-binding PCMH-type domain maps to histidine 129–aspartate 313.

It belongs to the oxygen-dependent FAD-linked oxidoreductase family. It depends on FAD as a cofactor.

It functions in the pathway alkaloid biosynthesis; ergot alkaloid biosynthesis. In terms of biological role, FAD-linked oxidoreductase; part of the gene cluster that mediates the biosynthesis of fungal ergot alkaloid. DmaW catalyzes the first step of ergot alkaloid biosynthesis by condensing dimethylallyl diphosphate (DMAP) and tryptophan to form 4-dimethylallyl-L-tryptophan. The second step is catalyzed by the methyltransferase easF that methylates 4-dimethylallyl-L-tryptophan in the presence of S-adenosyl-L-methionine, resulting in the formation of 4-dimethylallyl-L-abrine. The catalase easC and the FAD-dependent oxidoreductase easE then transform 4-dimethylallyl-L-abrine to chanoclavine-I which is further oxidized by easD in the presence of NAD(+), resulting in the formation of chanoclavine-I aldehyde. Chanoclavine-I aldehyde is the precursor of ergoamides and ergopeptines in Clavicipitaceae, and clavine-type alcaloids such as fumiclavine in Trichocomaceae. However, the metabolites downstream of chanoclavine-I aldehyde in Arthrodermataceae have not been identified yet. The chain is FAD-linked oxidoreductase easE from Arthroderma otae (strain ATCC MYA-4605 / CBS 113480) (Microsporum canis).